The primary structure comprises 365 residues: Probable dual-specificity RNA methyltransferase RlmN (365 aa).

Catalysis depends on glutamate 99, which acts as the Proton acceptor. The Radical SAM core domain maps to 105–344 (QSYGLSVCVT…CVVRQEHGTD (240 aa)). Cysteine 112 and cysteine 349 form a disulfide bridge. [4Fe-4S] cluster-binding residues include cysteine 119, cysteine 123, and cysteine 126. S-adenosyl-L-methionine-binding positions include 171-172 (GE), serine 203, 227-229 (SLH), and asparagine 305. The S-methylcysteine intermediate role is filled by cysteine 349.

Belongs to the radical SAM superfamily. RlmN family. [4Fe-4S] cluster serves as cofactor.

It is found in the cytoplasm. It catalyses the reaction adenosine(2503) in 23S rRNA + 2 reduced [2Fe-2S]-[ferredoxin] + 2 S-adenosyl-L-methionine = 2-methyladenosine(2503) in 23S rRNA + 5'-deoxyadenosine + L-methionine + 2 oxidized [2Fe-2S]-[ferredoxin] + S-adenosyl-L-homocysteine. It carries out the reaction adenosine(37) in tRNA + 2 reduced [2Fe-2S]-[ferredoxin] + 2 S-adenosyl-L-methionine = 2-methyladenosine(37) in tRNA + 5'-deoxyadenosine + L-methionine + 2 oxidized [2Fe-2S]-[ferredoxin] + S-adenosyl-L-homocysteine. Its function is as follows. Specifically methylates position 2 of adenine 2503 in 23S rRNA and position 2 of adenine 37 in tRNAs. The protein is Probable dual-specificity RNA methyltransferase RlmN of Lactococcus lactis subsp. cremoris (strain MG1363).